The sequence spans 66 residues: Large ribosomal subunit protein bL35 (66 aa).

It belongs to the bacterial ribosomal protein bL35 family.

In Borreliella burgdorferi (strain ATCC 35210 / DSM 4680 / CIP 102532 / B31) (Borrelia burgdorferi), this protein is Large ribosomal subunit protein bL35.